Here is a 148-residue protein sequence, read N- to C-terminus: uncharacterized protein (148 aa).

2 helical membrane passes run 16–36 (IVGAVIFSMSIIVILYISIIL) and 41–61 (LSFSIILAVDILIIALFAYIF).

It to M.jannaschii MJ0696.

It is found in the cell membrane. This is an uncharacterized protein from Methanocaldococcus jannaschii (strain ATCC 43067 / DSM 2661 / JAL-1 / JCM 10045 / NBRC 100440) (Methanococcus jannaschii).